A 342-amino-acid chain; its full sequence is Ribosomal RNA small subunit methyltransferase C (342 aa).

The protein belongs to the methyltransferase superfamily. RsmC family. In terms of assembly, monomer.

The protein localises to the cytoplasm. It carries out the reaction guanosine(1207) in 16S rRNA + S-adenosyl-L-methionine = N(2)-methylguanosine(1207) in 16S rRNA + S-adenosyl-L-homocysteine + H(+). Its function is as follows. Specifically methylates the guanine in position 1207 of 16S rRNA in the 30S particle. The sequence is that of Ribosomal RNA small subunit methyltransferase C from Klebsiella pneumoniae subsp. pneumoniae (strain ATCC 700721 / MGH 78578).